Here is a 517-residue protein sequence, read N- to C-terminus: Squalene epoxidase 6 (517 aa).

2 helical membrane-spanning segments follow: residues 3–23 and 45–65; these read FTHV…VFYL and AADV…YALA. Residues 55–56, 75–76, R83, F88, R156, V172, D336, and M349 contribute to the FAD site; these read VG and ER. A helical membrane pass occupies residues 447–467; the sequence is LVYHLCAITLSSIGQLLSPFP.

It belongs to the squalene monooxygenase family. The cofactor is FAD. As to expression, expressed in seedlings, leaves, stems, inflorescences and siliques.

The protein resides in the membrane. The catalysed reaction is squalene + reduced [NADPH--hemoprotein reductase] + O2 = (S)-2,3-epoxysqualene + oxidized [NADPH--hemoprotein reductase] + H2O + H(+). Its pathway is terpene metabolism; lanosterol biosynthesis; lanosterol from farnesyl diphosphate: step 2/3. Its function is as follows. Catalyzes the stereospecific oxidation of squalene to (S)-2,3-epoxysqualene, and is considered to be a rate-limiting enzyme in steroid biosynthesis. This chain is Squalene epoxidase 6 (SQE6), found in Arabidopsis thaliana (Mouse-ear cress).